An 874-amino-acid polypeptide reads, in one-letter code: MKSSEIRQKFLQFFQSKGHTIVPSSSLVPANDPTLLFTNSGMVQFKDVFTGKEARAYKRATSSQRSVRAGGKHNDLENVGYTARHHTFFEMLGNFSFGDYFKREAIQYAWELLTQVYRLPAEKLWVTVYQEDDEAYDIWAKEVGVPAERIIRIGDNKGARYASDNFWQMADTGPCGPCSEIFYDHGPEIWGGPPGSPEEDGDRYIEIWNLVFMQFERDAAGNMERLPKPCVDTGMGLERIAAVLQHVHSNYEIDLFQKLIAAAARETGVKDLADNSLKVIADHIRACAFLIVDGIIPSNEGRGYVLRRIVRRALRHGYKLGQTKPFFHRLVPDLVAEMGEAYPELAQVAERVAQVLRQEEERFGETLEHGMKILDGALAKVAKGDPLDGTTLFTLYDTYGFPVDLTADICRERGVEVDMAGFEAAMQRQREQARAAGKFKMAEGLSYEGAETRFEGYESLELSGVKVTALYVEGTQVEQVSAGQDAVVVLDATPFYAESGGQVGDTGLLEAGGVRFAVADTLKIQPGVFGHHGTLEAGALKVGDTLLARVDAVRRARTVRNHSATHLMHKALREVLGAHVQQRGSLVDPDKTRFDFAHDAPMTAEQIARVEAIVNAEVLANQATEAKVMAYDDAVKGGAMALFGEKYGDTVRVLDIGFSRELCGGTHVRRTGDIGLFKVVSEGGVAAGVRRIEAITGDNALAWVQDQNALLQRAAGVLRAPAHELPERIVQVQEQLKALEKELEQARTKLAASAGNDLAATATVEVKGIKVLAASIGDVDPKALRGMVDNLKDRLKPAVVLLAAGSADGKISLVGGVTADLTGRIKAGDLVGFVAGQVGGKGGGRPDMAMGGGTDLAALPAAVASVQKWVDERL.

Zn(2+)-binding residues include His-562, His-566, Cys-663, and His-667.

The protein belongs to the class-II aminoacyl-tRNA synthetase family. Requires Zn(2+) as cofactor.

The protein resides in the cytoplasm. It carries out the reaction tRNA(Ala) + L-alanine + ATP = L-alanyl-tRNA(Ala) + AMP + diphosphate. Its function is as follows. Catalyzes the attachment of alanine to tRNA(Ala) in a two-step reaction: alanine is first activated by ATP to form Ala-AMP and then transferred to the acceptor end of tRNA(Ala). Also edits incorrectly charged Ser-tRNA(Ala) and Gly-tRNA(Ala) via its editing domain. The polypeptide is Alanine--tRNA ligase (Bordetella bronchiseptica (strain ATCC BAA-588 / NCTC 13252 / RB50) (Alcaligenes bronchisepticus)).